Here is a 1085-residue protein sequence, read N- to C-terminus: DNA polymerase (1085 aa).

The disordered stretch occupies residues 1059–1085 (YDQKRPNPRPQEPLLENPFWDDSSQTA).

Belongs to the DNA polymerase type-B family. Heterodimer with the terminal protein; this heterodimer binds to bp 9 to 18 of the genome. Forms a complex with viral pTP, DBP and hosts NFIA and POU2F1/OCT1 for initiation of replication.

The protein resides in the host nucleus. It catalyses the reaction DNA(n) + a 2'-deoxyribonucleoside 5'-triphosphate = DNA(n+1) + diphosphate. Functionally, eukaryotic-type DNA polymerase involved in viral genomic replication. DNA synthesis is protein primed, and acts in a strand displacement replication. Its function is as follows. Eukaryotic-type DNA polymerase involved in viral genomic replication. DNA synthesis is protein primed, and acts in a strand displacement replication. Assembles in complex with viral pTP, DBP, host NFIA and host POU2F1/OCT1 on viral origin of replication. The polymerase covalently transfers dCMP onto pTP, thereby initiating complementary strand synthesis. The chain is DNA polymerase from Pantherophis guttatus (Corn snake).